The sequence spans 560 residues: Dihydroxy-acid dehydratase (560 aa).

[2Fe-2S] cluster is bound at residue C50. Position 82 (D82) interacts with Mg(2+). Residue C123 participates in [2Fe-2S] cluster binding. Residues D124 and K125 each coordinate Mg(2+). K125 carries the N6-carboxylysine modification. A [2Fe-2S] cluster-binding site is contributed by C195. E447 lines the Mg(2+) pocket. Residue S473 is the Proton acceptor of the active site.

Belongs to the IlvD/Edd family. Homodimer. The cofactor is [2Fe-2S] cluster. Mg(2+) serves as cofactor.

It catalyses the reaction (2R)-2,3-dihydroxy-3-methylbutanoate = 3-methyl-2-oxobutanoate + H2O. The catalysed reaction is (2R,3R)-2,3-dihydroxy-3-methylpentanoate = (S)-3-methyl-2-oxopentanoate + H2O. It participates in amino-acid biosynthesis; L-isoleucine biosynthesis; L-isoleucine from 2-oxobutanoate: step 3/4. The protein operates within amino-acid biosynthesis; L-valine biosynthesis; L-valine from pyruvate: step 3/4. Functions in the biosynthesis of branched-chain amino acids. Catalyzes the dehydration of (2R,3R)-2,3-dihydroxy-3-methylpentanoate (2,3-dihydroxy-3-methylvalerate) into 2-oxo-3-methylpentanoate (2-oxo-3-methylvalerate) and of (2R)-2,3-dihydroxy-3-methylbutanoate (2,3-dihydroxyisovalerate) into 2-oxo-3-methylbutanoate (2-oxoisovalerate), the penultimate precursor to L-isoleucine and L-valine, respectively. The chain is Dihydroxy-acid dehydratase from Thermosynechococcus vestitus (strain NIES-2133 / IAM M-273 / BP-1).